Reading from the N-terminus, the 274-residue chain is Long chain fatty acid elongase 2 (274 aa).

7 helical membrane passes run 29–49 (MSTFVPLSYKIMIGYLVTIYF), 73–93 (FSLFSGIAAYKLIPELFGVFM), 115–135 (FWGWAFVMSKAPELGDTMFLV), 140–160 (PVIFMHWYHHALTFVYAVVTY), 170–190 (SLALNLAVHTVMYFYFAVRAL), 201–221 (FITTIQIVQFVISCYIFGHLV), and 238–258 (VLSIGGLMYISYLFLFAKFFY).

It belongs to the ELO family. As to expression, expressed in various tissues and parts of the body, including the ventral cord, pharyngeal muscles, uterus, and the tail, and most strongly in intestinal cells.

It is found in the membrane. It carries out the reaction hexadecanoyl-CoA + malonyl-CoA + H(+) = 3-oxooctadecanoyl-CoA + CO2 + CoA. Its pathway is lipid metabolism; fatty acid biosynthesis. Functionally, catalyzes the first and rate-limiting reaction of the four reactions that constitute the long-chain fatty acids elongation cycle. Uses malonyl-CoA to add 2 carbons per cycle to the chain of long-chain fatty acids. Condensing enzyme responsible for the elongation of palmitate (hexadecanoate, 16:0), also involved in polyunsaturated fatty acid (PUFA) biosynthesis. The sequence is that of Long chain fatty acid elongase 2 from Caenorhabditis elegans.